Consider the following 127-residue polypeptide: Large ribosomal subunit protein bL20 (127 aa).

The protein belongs to the bacterial ribosomal protein bL20 family.

Functionally, binds directly to 23S ribosomal RNA and is necessary for the in vitro assembly process of the 50S ribosomal subunit. It is not involved in the protein synthesizing functions of that subunit. The polypeptide is Large ribosomal subunit protein bL20 (Bifidobacterium longum (strain NCC 2705)).